The chain runs to 214 residues: EEF1A lysine methyltransferase 1 (214 aa).

At S2 the chain carries N-acetylserine. Residue S2 is modified to Phosphoserine.

It belongs to the class I-like SAM-binding methyltransferase superfamily. EFM5 family.

It localises to the cytoplasm. It catalyses the reaction L-lysyl-[protein] + 3 S-adenosyl-L-methionine = N(6),N(6),N(6)-trimethyl-L-lysyl-[protein] + 3 S-adenosyl-L-homocysteine + 3 H(+). Functionally, protein-lysine methyltransferase that selectively catalyzes the trimethylation of EEF1A at 'Lys-79'. The sequence is that of EEF1A lysine methyltransferase 1 from Mus musculus (Mouse).